We begin with the raw amino-acid sequence, 340 residues long: MNLTGKKVILHDMSLRDGMHARQHQITLKEMVDVATGLDAAGVPLIEVTHGDGLGGASLNYGFPAHTDEEYLSAVIPKMKQAKVSALLLPGIGTVDHLRMAHQLGVNTIRVATHCTEADVSGQHIALSRDLGLDTVGFLMMAHMVSPEKLLEQAKLMESYGANCIYCTDSAGYMLPGDVTSHIERLRGELKSDTQIGFHGHHNMGMSIANSLAAIEAGAERIDGSVAGLGAGAGNTPLEVFVAVLERMQVHHGVNLYDIMDVAEDLVTPMMDQPIRIDRDALTLGYAGVYSSFLLFAQRAEKKYGVPARDILLELGRRGTVGGQEDMIDDTAMNMARELA.

Positions 8 to 260 constitute a Pyruvate carboxyltransferase domain; that stretch reads VILHDMSLRD…HHGVNLYDIM (253 aa). Residue 16-17 participates in substrate binding; that stretch reads RD. Asp-17 contacts Mn(2+). The active-site Proton acceptor is His-20. 2 residues coordinate substrate: Ser-170 and His-199. His-199 and His-201 together coordinate Mn(2+). Tyr-290 contacts substrate.

Belongs to the 4-hydroxy-2-oxovalerate aldolase family.

It catalyses the reaction (S)-4-hydroxy-2-oxopentanoate = acetaldehyde + pyruvate. This Shewanella halifaxensis (strain HAW-EB4) protein is 4-hydroxy-2-oxovalerate aldolase.